The sequence spans 375 residues: ATSGKVIRCRAAVAWAVGKPLSVEEVEVAPPKAGEVRIKIVATGICRTDDHVVKGCIANVEFPVIPGHEGAGIVESIGEGVTSVKPGDKVIPLCIPNCGECTFCLNPEASYCVKSHFSEPQNLMPDKTSRFTCKGKQIHHFMWVSTFAEYTVAPETAVAKIDSAAPLDKVCLLGCGFSTGYGAAINTAKVKPGSTCAVFGLGGVGLSVVMGCKVAGASRIIAIDINKDKFAKAKELGATDCINPQDFNKPIQEVVTEMTGHEVDYSFEVIGRADTMIAALASCNMNTGVFVMVGVAPSDAVISVDPLLLLTGRTHKGTLVGGSKGRNFIPRLVSSYLEKKFNSDLLITHTLPFAKVNEGFALLHAGKSIRTVLLF.

The residue at position 1 (Ala1) is an N-acetylalanine. Zn(2+) is bound by residues Cys46, His68, Cys98, Cys101, Cys104, Cys112, and Cys175. Residues 200–205 (GLGGVG), Asp224, Lys229, 293–295 (VGV), and Arg370 each bind NAD(+).

The protein belongs to the zinc-containing alcohol dehydrogenase family. Class-I subfamily. As to quaternary structure, homodimer. The cofactor is Zn(2+).

Its subcellular location is the cytoplasm. It catalyses the reaction a primary alcohol + NAD(+) = an aldehyde + NADH + H(+). The catalysed reaction is a secondary alcohol + NAD(+) = a ketone + NADH + H(+). This is Alcohol dehydrogenase 1 from Columba livia (Rock dove).